The primary structure comprises 828 residues: Auxin response factor 2B (828 aa).

Positions 128–230 (FCKTLTASDT…ELRVGVRRAM (103 aa)) form a DNA-binding region, TF-B3. 3 disordered regions span residues 348–397 (PDRV…GSSK), 681–703 (EQFQ…HSTR), and 791–828 (NPGT…PEDS). Pro residues predominate over residues 360 to 370 (LSPPALNPLPI). Polar residues predominate over residues 380 to 390 (VLPSSPDSSVL). Positions 703–786 (RSCTKVHKQG…RKIFIYTKDE (84 aa)) constitute a PB1 domain. Polar residues predominate over residues 791-806 (NPGTLNSKGEDNSSVA).

The protein belongs to the ARF family. In terms of assembly, homodimers and heterodimers. In terms of tissue distribution, expressed in root, leaf and stem. Also expressed in flower and fruit. Expressed in flower buds about three days before opening including stamen, petal and sepal with the highest in ovary.

Its subcellular location is the nucleus. Auxin response factors (ARFs) are transcriptional factors that binds specifically to the DNA sequence 5'-TGTCTC-3' found in the auxin-responsive promoter elements (AuxREs). Could act as transcriptional activator or repressor. Involved in the control of fruit ripening process. Regulates expression of a number of ripening regulators, transcription factors, and ethylene biosynthesis and signaling components. May act as a transcriptional repressor of auxin-responsive genes. This Solanum lycopersicum (Tomato) protein is Auxin response factor 2B.